Consider the following 297-residue polypeptide: Probable endonuclease 4 (297 aa).

Residues His-69, His-110, Glu-145, Asp-179, His-182, His-214, Asp-227, His-229, and Glu-259 each contribute to the Zn(2+) site.

The protein belongs to the AP endonuclease 2 family. Requires Zn(2+) as cofactor.

The enzyme catalyses Endonucleolytic cleavage to 5'-phosphooligonucleotide end-products.. Functionally, endonuclease IV plays a role in DNA repair. It cleaves phosphodiester bonds at apurinic or apyrimidinic (AP) sites, generating a 3'-hydroxyl group and a 5'-terminal sugar phosphate. This Listeria welshimeri serovar 6b (strain ATCC 35897 / DSM 20650 / CCUG 15529 / CIP 8149 / NCTC 11857 / SLCC 5334 / V8) protein is Probable endonuclease 4.